The chain runs to 565 residues: Proline--tRNA ligase (565 aa).

This sequence belongs to the class-II aminoacyl-tRNA synthetase family. ProS type 1 subfamily. Homodimer.

The protein localises to the cytoplasm. The enzyme catalyses tRNA(Pro) + L-proline + ATP = L-prolyl-tRNA(Pro) + AMP + diphosphate. Its function is as follows. Catalyzes the attachment of proline to tRNA(Pro) in a two-step reaction: proline is first activated by ATP to form Pro-AMP and then transferred to the acceptor end of tRNA(Pro). As ProRS can inadvertently accommodate and process non-cognate amino acids such as alanine and cysteine, to avoid such errors it has two additional distinct editing activities against alanine. One activity is designated as 'pretransfer' editing and involves the tRNA(Pro)-independent hydrolysis of activated Ala-AMP. The other activity is designated 'posttransfer' editing and involves deacylation of mischarged Ala-tRNA(Pro). The misacylated Cys-tRNA(Pro) is not edited by ProRS. The protein is Proline--tRNA ligase of Francisella tularensis subsp. tularensis (strain FSC 198).